A 306-amino-acid chain; its full sequence is Ornithine carbamoyltransferase (306 aa).

Residues Ser-53–Thr-56, Gln-80, Arg-104, and His-131–Gln-134 contribute to the carbamoyl phosphate site. Residues Asn-162, Asp-219, and Ser-223–Met-224 contribute to the L-ornithine site. Residues Cys-259–Leu-260 and Arg-287 each bind carbamoyl phosphate.

The protein belongs to the aspartate/ornithine carbamoyltransferase superfamily. OTCase family.

Its subcellular location is the cytoplasm. The enzyme catalyses carbamoyl phosphate + L-ornithine = L-citrulline + phosphate + H(+). Its pathway is amino-acid biosynthesis; L-arginine biosynthesis; L-arginine from L-ornithine and carbamoyl phosphate: step 1/3. Functionally, reversibly catalyzes the transfer of the carbamoyl group from carbamoyl phosphate (CP) to the N(epsilon) atom of ornithine (ORN) to produce L-citrulline. In Psychrobacter sp. (strain PRwf-1), this protein is Ornithine carbamoyltransferase.